A 98-amino-acid chain; its full sequence is DNA-binding protein Fis (98 aa).

The segment at residues 74-93 (QTRAAVMMGINRGTLRKKLK) is a DNA-binding region (H-T-H motif).

It belongs to the transcriptional regulatory Fis family. In terms of assembly, homodimer.

Functionally, activates ribosomal RNA transcription. Plays a direct role in upstream activation of rRNA promoters. In Aeromonas hydrophila subsp. hydrophila (strain ATCC 7966 / DSM 30187 / BCRC 13018 / CCUG 14551 / JCM 1027 / KCTC 2358 / NCIMB 9240 / NCTC 8049), this protein is DNA-binding protein Fis.